The sequence spans 896 residues: Cytokine receptor common subunit beta (896 aa).

The signal sequence occupies residues 1 to 22 (MDQQMALTWGLCYMALVALCWG). The Extracellular segment spans residues 23–441 (HGVTEAEETV…SEEYTWKTDW (419 aa)). An intrachain disulfide couples C39 to C49. Residue N62 is glycosylated (N-linked (GlcNAc...) asparagine). Cystine bridges form between C77/C99 and C88/C94. In terms of domain architecture, Fibronectin type-III 1 spans 136–243 (PPLPKNVSIS…PEVHWDSQPG (108 aa)). A glycan (N-linked (GlcNAc...) asparagine) is linked at N141. Residues 220–233 (SPGSSLSGRPSRWS) are compositionally biased toward low complexity. The disordered stretch occupies residues 220 to 243 (SPGSSLSGRPSRWSPEVHWDSQPG). 2 cysteine pairs are disulfide-bonded: C253–C263 and C292–C310. The region spanning 343–439 (QMEPPTLNLT…KWSEEYTWKT (97 aa)) is the Fibronectin type-III 2 domain. Residue N350 is glycosylated (N-linked (GlcNAc...) asparagine). A WSXWS motif motif is present at residues 428 to 432 (WSKWS). A helical membrane pass occupies residues 442 to 463 (VMPTLWIVLILVFLILTLLLIL). Residues 464 to 896 (RFGCVSVYRT…WDNSQSGKVC (433 aa)) lie on the Cytoplasmic side of the membrane. Positions 477–485 (WKEKIPNPS) match the Box 1 motif motif. 2 disordered regions span residues 543-620 (EDPN…GGSL) and 658-725 (CGSS…TGPL). 2 stretches are compositionally biased toward polar residues: residues 555 to 571 (PDTT…QLPN) and 658 to 668 (CGSSLETSGSP). Residues 716 to 725 (PVLTLPTGPL) show a composition bias toward low complexity. Phosphoserine is present on residues S752 and S754. At Y765 the chain carries Phosphotyrosine. Positions 771–810 (SVSQAAKSPPGHPAPPVASSPTVIPGEPREEVGPASPHPE) are disordered.

The protein belongs to the type I cytokine receptor family. Type 4 subfamily. In terms of assembly, heterodimer of an alpha and a beta subunit. The beta subunit is common to the IL3, IL5 and GM-CSF receptors. The signaling GM-CSF receptor complex is a dodecamer of two head-to-head hexamers of two alpha, two beta, and two ligand subunits. Interacts with TMEM102; this interaction occurs preferentially in the absence of CSF2. Interacts with FCER1G; this interaction is direct. Interacts with LYN. Post-translationally, may be phosphorylated by LYN.

It is found in the membrane. Its function is as follows. High affinity receptor for interleukin-3, interleukin-5 and granulocyte-macrophage colony-stimulating factor. The protein is Cytokine receptor common subunit beta (Csf2rb) of Mus musculus (Mouse).